Consider the following 292-residue polypeptide: ATP synthase gamma chain (292 aa).

It belongs to the ATPase gamma chain family. In terms of assembly, F-type ATPases have 2 components, CF(1) - the catalytic core - and CF(0) - the membrane proton channel. CF(1) has five subunits: alpha(3), beta(3), gamma(1), delta(1), epsilon(1). CF(0) has three main subunits: a, b and c.

The protein localises to the cell membrane. Its function is as follows. Produces ATP from ADP in the presence of a proton gradient across the membrane. The gamma chain is believed to be important in regulating ATPase activity and the flow of protons through the CF(0) complex. The polypeptide is ATP synthase gamma chain (Caldicellulosiruptor saccharolyticus (strain ATCC 43494 / DSM 8903 / Tp8T 6331)).